Consider the following 352-residue polypeptide: Divinyl chlorophyll a/b light-harvesting protein PcbH (352 aa).

6 consecutive transmembrane segments (helical) span residues 27–47, 88–108, 140–160, 202–222, 242–262, and 309–329; these read FIGS…ASCL, VATI…AGLA, FILG…VEWA, VMSG…FHIA, AVLS…AFWA, and LVNV…WHAL.

It belongs to the PsbB/PsbC family. IsiA/Pcb subfamily. In terms of assembly, the antenna complex consists of divinyl chlorophylls (a and b) and divinyl chlorophyll a/b binding proteins and binds more divinyl chlorophyll b than does the antenna complex from high-light-adapted Prochlorococcus. Requires divinyl chlorophyll a as cofactor. The cofactor is divinyl chlorophyll b.

It localises to the cellular thylakoid membrane. The antenna complex functions as a light receptor, it captures and delivers excitation energy to photosystems II and I. The Prochlorales pcb genes are not related to higher plant LHCs. This Prochlorococcus marinus (strain SARG / CCMP1375 / SS120) protein is Divinyl chlorophyll a/b light-harvesting protein PcbH (pcbH).